A 362-amino-acid polypeptide reads, in one-letter code: MKESKKRVLVGMSGGIDSTATCLMLQEQGYEIVGVTMRVWGDEPQDARELAARMGIEHYVADERVPFKDTIVKNFIDEYRQGRTPNPCVMCNPLFKFRMLIEWADKLGCDWIATGHYSRLEERNGHIYIVAGDDDKKDQSYFLWRLGQDVLRRCIFPLGNYTKQTVRDYLHEKGYEAKSKEGESMEVCFIKGDYRDFLREQCPELDAEVGPGWFVSSEGVKLGQHKGFPYYTIGQRKGLEIALGKPAYVLKINPQKNTVMLGDAGQLKAEYMVAEQDNIVDEDELFACPDLAVRIRYRSRPIPCRVKRLEDGHLLVRFLAEASAIAPGQSAVFYEGRRVLGGAFIASQRGIGLVIEQNKDWK.

ATP-binding positions include 11-18 (GMSGGIDS) and methionine 37. Residue cysteine 91 is the Nucleophile of the active site. The cysteines at positions 91 and 188 are disulfide-linked. Residue glycine 115 participates in ATP binding. Positions 137-139 (KDQ) are interaction with tRNA. Catalysis depends on cysteine 188, which acts as the Cysteine persulfide intermediate. An interaction with tRNA region spans residues 296 to 297 (RY).

It belongs to the MnmA/TRMU family.

The protein resides in the cytoplasm. The enzyme catalyses S-sulfanyl-L-cysteinyl-[protein] + uridine(34) in tRNA + AH2 + ATP = 2-thiouridine(34) in tRNA + L-cysteinyl-[protein] + A + AMP + diphosphate + H(+). Catalyzes the 2-thiolation of uridine at the wobble position (U34) of tRNA, leading to the formation of s(2)U34. This Bacteroides fragilis (strain YCH46) protein is tRNA-specific 2-thiouridylase MnmA 3.